The chain runs to 187 residues: ECF RNA polymerase sigma factor SigK (187 aa).

The tract at residues 30-96 (YDHTCTRVYG…RAVDRVRAEQ (67 aa)) is sigma-70 factor domain-2. Residues 53–56 (ETTQ) carry the Interaction with polymerase core subunit RpoC motif. The interval 133-182 (CLDGLTDTQRQCIELAYYGGLTYAEVSQRLATNLSTIKSRMRDALRGLRN) is sigma-70 factor domain-4. A DNA-binding region (H-T-H motif) is located at residues 155–174 (YAEVSQRLATNLSTIKSRMR).

The protein belongs to the sigma-70 factor family. ECF subfamily. Interacts transiently with the RNA polymerase catalytic core formed by RpoA, RpoB, RpoC and RpoZ (2 alpha, 1 beta, 1 beta' and 1 omega subunit) to form the RNA polymerase holoenzyme that can initiate transcription. Interacts (via sigma-70 factor domain 4) with anti-sigma-K factor RskA.

Functionally, sigma factors are initiation factors that promote the attachment of RNA polymerase to specific initiation sites and are then released. Extracytoplasmic function (ECF) sigma factors are held in an inactive form by an anti-sigma factor until released by regulated intramembrane proteolysis. The sequence is that of ECF RNA polymerase sigma factor SigK (sigK) from Mycobacterium ulcerans (strain Agy99).